The primary structure comprises 142 residues: uncharacterized protein (142 aa).

In terms of domain architecture, N-acetyltransferase spans 2 to 142 (IHMKQLTSKE…IESYLFRKPV (141 aa)).

It belongs to the acetyltransferase family.

This is an uncharacterized protein from Bacillus subtilis (strain 168).